The following is a 498-amino-acid chain: Aspartyl/glutamyl-tRNA(Asn/Gln) amidotransferase subunit B (498 aa).

This sequence belongs to the GatB/GatE family. GatB subfamily. In terms of assembly, heterotrimer of A, B and C subunits.

The catalysed reaction is L-glutamyl-tRNA(Gln) + L-glutamine + ATP + H2O = L-glutaminyl-tRNA(Gln) + L-glutamate + ADP + phosphate + H(+). It carries out the reaction L-aspartyl-tRNA(Asn) + L-glutamine + ATP + H2O = L-asparaginyl-tRNA(Asn) + L-glutamate + ADP + phosphate + 2 H(+). Its function is as follows. Allows the formation of correctly charged Asn-tRNA(Asn) or Gln-tRNA(Gln) through the transamidation of misacylated Asp-tRNA(Asn) or Glu-tRNA(Gln) in organisms which lack either or both of asparaginyl-tRNA or glutaminyl-tRNA synthetases. The reaction takes place in the presence of glutamine and ATP through an activated phospho-Asp-tRNA(Asn) or phospho-Glu-tRNA(Gln). The sequence is that of Aspartyl/glutamyl-tRNA(Asn/Gln) amidotransferase subunit B from Erythrobacter litoralis (strain HTCC2594).